A 352-amino-acid chain; its full sequence is tRNA-specific 2-thiouridylase MnmA (352 aa).

ATP contacts are provided by residues 6 to 13 and leucine 32; that span reads AMSGGVDS. The active-site Nucleophile is cysteine 101. Residues cysteine 101 and cysteine 194 are joined by a disulfide bond. Glycine 125 serves as a coordination point for ATP. The interaction with tRNA stretch occupies residues 144–146; that stretch reads KDQ. The active-site Cysteine persulfide intermediate is cysteine 194.

It belongs to the MnmA/TRMU family.

It is found in the cytoplasm. The enzyme catalyses S-sulfanyl-L-cysteinyl-[protein] + uridine(34) in tRNA + AH2 + ATP = 2-thiouridine(34) in tRNA + L-cysteinyl-[protein] + A + AMP + diphosphate + H(+). In terms of biological role, catalyzes the 2-thiolation of uridine at the wobble position (U34) of tRNA, leading to the formation of s(2)U34. This Frankia casuarinae (strain DSM 45818 / CECT 9043 / HFP020203 / CcI3) protein is tRNA-specific 2-thiouridylase MnmA.